The sequence spans 158 residues: uncharacterized protein (158 aa).

This is an uncharacterized protein from Mycoplasma pneumoniae (strain ATCC 29342 / M129 / Subtype 1) (Mycoplasmoides pneumoniae).